Consider the following 86-residue polypeptide: Defensin-like protein 97 (86 aa).

Positions 1-27 (MGSLRVSTFAVAVVVCLSILLMSPTDG) are cleaved as a signal peptide. Disulfide bonds link cysteine 31-cysteine 74, cysteine 38-cysteine 60, cysteine 44-cysteine 71, and cysteine 48-cysteine 73.

Belongs to the DEFL family.

The protein localises to the secreted. The protein is Defensin-like protein 97 (LCR85) of Arabidopsis thaliana (Mouse-ear cress).